The primary structure comprises 503 residues: Inosine-5'-monophosphate dehydrogenase 1 (503 aa).

Ser2 carries the N-acetylserine modification. The region spanning 167 to 225 (MKSCDSSDYCVPWEIDFEKLEFVLEDKQKGFVVLERDGETVNVVTKDDIQRVKGYPKSG) is the CBS domain. Residues 265-267 (DSS) and 315-317 (GMG) each bind NAD(+). K(+)-binding residues include Gly317 and Gly319. Ser320 is an IMP binding site. Cys322 is a K(+) binding site. Cys322 serves as the catalytic Thioimidate intermediate. IMP-binding positions include 355–357 (DGG), 378–379 (GS), and 402–406 (YRGMG). The Proton acceptor role is filled by Arg418. Gln430 is an IMP binding site. Residues Glu489, Gly490, and Gly491 each coordinate K(+).

The protein belongs to the IMPDH/GMPR family. Homotetramer. Requires K(+) as cofactor.

The protein resides in the cytoplasm. The catalysed reaction is IMP + NAD(+) + H2O = XMP + NADH + H(+). It functions in the pathway purine metabolism; XMP biosynthesis via de novo pathway; XMP from IMP: step 1/1. With respect to regulation, mycophenolic acid (MPA) is a non-competitive inhibitor that prevents formation of the closed enzyme conformation by binding to the same site as the amobile flap. In contrast, mizoribine monophosphate (MZP) is a competitive inhibitor that induces the closed conformation. MPA is a potent inhibitor of mammalian IMPDHs but a poor inhibitor of the bacterial enzymes. MZP is a more potent inhibitor of bacterial IMPDH. Functionally, catalyzes the conversion of inosine 5'-phosphate (IMP) to xanthosine 5'-phosphate (XMP), the first committed and rate-limiting step in the de novo synthesis of guanine nucleotides, and therefore plays an important role in the regulation of cell growth. This Arabidopsis thaliana (Mouse-ear cress) protein is Inosine-5'-monophosphate dehydrogenase 1.